A 254-amino-acid chain; its full sequence is 3-dehydroquinate dehydratase (254 aa).

3-dehydroquinate-binding positions include 47 to 49 (EFR) and Arg83. His144 serves as the catalytic Proton donor/acceptor. Lys171 functions as the Schiff-base intermediate with substrate in the catalytic mechanism. Arg213, Ser232, and Gln236 together coordinate 3-dehydroquinate.

The protein belongs to the type-I 3-dehydroquinase family. As to quaternary structure, homodimer.

It carries out the reaction 3-dehydroquinate = 3-dehydroshikimate + H2O. It participates in metabolic intermediate biosynthesis; chorismate biosynthesis; chorismate from D-erythrose 4-phosphate and phosphoenolpyruvate: step 3/7. In terms of biological role, involved in the third step of the chorismate pathway, which leads to the biosynthesis of aromatic amino acids. Catalyzes the cis-dehydration of 3-dehydroquinate (DHQ) and introduces the first double bond of the aromatic ring to yield 3-dehydroshikimate. The sequence is that of 3-dehydroquinate dehydratase from Neisseria gonorrhoeae (strain ATCC 700825 / FA 1090).